Here is a 235-residue protein sequence, read N- to C-terminus: Small ribosomal subunit protein uS3 (235 aa).

One can recognise a KH type-2 domain in the interval 39–107 (VRKFLLGQLS…PTKLNISEIR (69 aa)).

Belongs to the universal ribosomal protein uS3 family. Part of the 30S ribosomal subunit. Forms a tight complex with proteins S10 and S14.

Functionally, binds the lower part of the 30S subunit head. Binds mRNA in the 70S ribosome, positioning it for translation. The protein is Small ribosomal subunit protein uS3 of Blochmanniella floridana.